The chain runs to 320 residues: Mitochondrial glutamate carrier 2 (320 aa).

Solcar repeat units lie at residues 11–97 (LSIT…LRQL), 105–215 (RNLK…LNQL), and 224–313 (ASFT…GIGE). The next 3 membrane-spanning stretches (helical) occupy residues 17–37 (LINGGIAGLVGVTCVFPIDLA), 66–86 (FLGMYRGAAVNLTLVTPEKAI), and 111–131 (MLAGCGAGICQVVITCPMEML). Phosphoserine is present on Ser150. A run of 3 helical transmembrane segments spans residues 190 to 210 (GLGATLLRDIPFSIIYFPLFA), 230 to 250 (FVAGCAAGSVSAVAVTPLDVL), and 293 to 313 (ALVIAPLFGIAQGVYFIGIGE).

This sequence belongs to the mitochondrial carrier (TC 2.A.29) family.

The protein resides in the mitochondrion inner membrane. It catalyses the reaction L-glutamate(in) + H(+)(in) = L-glutamate(out) + H(+)(out). In terms of biological role, responsible for the transport of glutamate from the cytosol into the mitochondrial matrix with the concomitant import of a proton (symport system). This chain is Mitochondrial glutamate carrier 2 (Slc25a18), found in Rattus norvegicus (Rat).